Consider the following 3072-residue polypeptide: E1A-binding protein p400 (3072 aa).

Polar residues predominate over residues 1-22 (MHHGSGPQNVQHQLQRSRSFTG). Disordered regions lie at residues 1-55 (MHHG…SPGY), 125-149 (PMSQ…LQNV), and 222-250 (LSQP…TGLQ). Positions 31–40 (PNLPPSPAAP) are enriched in pro residues. 2 stretches are compositionally biased toward low complexity: residues 41-53 (FAPS…PQSP) and 125-136 (PMSQQVQTQSPT). Phosphoserine is present on residues serine 52 and serine 134. Phosphoserine is present on residues serine 315 and serine 321. Disordered stretches follow at residues 485 to 519 (SLTG…KRPR), 544 to 601 (MPTV…ASVP), and 635 to 769 (APIP…SQDK). Positions 556–569 (QATQLTGQKQSQQQ) are enriched in low complexity. A compositionally biased stretch (polar residues) spans 570-583 (YDPSTGPPVQNAAS). Residues 586-599 (TPPPQLPARLPPAS) are compositionally biased toward pro residues. 3 stretches are compositionally biased toward low complexity: residues 646–657 (PAPSSQPAQPAL), 668–682 (QTSQ…VAST), and 695–710 (SLPT…PVSG). Polar residues-rich tracts occupy residues 724-741 (NRPS…TSRS) and 754-765 (SPAQNAASSQDG). 3 positions are modified to phosphoserine: serine 735, serine 741, and serine 754. The region spanning 798–870 (LPKLQEAPRP…EQSRLRRIAA (73 aa)) is the HSA domain. Residues 914–928 (ESRLKGFDTSPEHSL) are compositionally biased toward basic and acidic residues. 2 disordered regions span residues 914-952 (ESRL…EDEE) and 997-1024 (FQWP…DRES). Threonine 922 bears the Phosphothreonine mark. 3 positions are modified to phosphoserine: serine 923, serine 927, and serine 940. Threonine 944 is modified (phosphothreonine). Positions 950–1364 (DEEETIEEEE…SVLSVLTRLQ (415 aa)) are interactions with RUVBL1 and RUVBL2. Phosphoserine occurs at positions 1009 and 1010. Residues 1102–1267 (AKLYRKNLNG…WTMVHFLIPG (166 aa)) form the Helicase ATP-binding domain. 1115 to 1122 (DEAGLGKT) contacts ATP. The DEAD box-like signature appears at 1218–1221 (DEMQ). At lysine 1471 the chain carries N6-acetyllysine. The segment at 1473 to 1503 (EGRTVAFPSTHPPRMANTNTSTATPQGQVRG) is disordered. Over residues 1488–1499 (ANTNTSTATPQG) the composition is skewed to polar residues. A phosphoserine mark is found at serine 1646 and serine 1650. Positions 1815–1972 (KLEALAILLQ…GNDYSMAFLT (158 aa)) constitute a Helicase C-terminal domain. 2 disordered regions span residues 2033 to 2062 (AQRS…DEEP) and 2203 to 2227 (KERK…GEAV). Positions 2043 to 2053 (GSSSVAVSSDS) are enriched in low complexity. Residues lysine 2265 and lysine 2272 each carry the N6-acetyllysine modification. Residues 2276 to 2345 (EPAQDSPDWL…QCRNRYENVI (70 aa)) form the Myb-like domain. Residues 2440-2699 (KEKKALADQQ…QQQQQQQQQT (260 aa)) are interaction with ZNF42. Residues 2441–2534 (EKKALADQQK…PQSKGQPTMT (94 aa)) are disordered. Composition is skewed to low complexity over residues 2446–2455 (ADQQKAQQPP) and 2463–2478 (QQQQ…QQQQ). A compositionally biased stretch (pro residues) spans 2479–2493 (QPPPPPQQPPPPVPQ). Residues 2494–2526 (PQAASSQTPAGQPAVQPQPQPQVQTQPQPVQPQ) are compositionally biased toward low complexity. Serine 2614 is modified (phosphoserine). Disordered stretches follow at residues 2734–2790 (QKMQ…TGTT) and 3028–3072 (ASLQ…PPCQ). Pro residues predominate over residues 2739–2754 (PPQPPPPQAQPGPPQQ). The segment covering 2755-2775 (PAQVQVQTPQPPQQQQSPQLT) has biased composition (low complexity). The segment covering 3042 to 3053 (PASSDSPSQQPK) has biased composition (polar residues).

It belongs to the SNF2/RAD54 helicase family. SWR1 subfamily. In terms of assembly, component of the NuA4 histone acetyltransferase complex which contains the catalytic subunit KAT5/TIP60 and the subunits EP400, TRRAP/PAF400, BRD8/SMAP, EPC1, DMAP1/DNMAP1, RUVBL1/TIP49, RUVBL2, ING3, actin, ACTL6A/BAF53A, MORF4L1/MRG15, MORF4L2/MRGX, MRGBP, YEATS4/GAS41, VPS72/YL1 and MEAF6. May also participate in the formation of NuA4 related complexes which lack the KAT5/TIP60 catalytic subunit, but which include the SWI/SNF related protein SRCAP. The NuA4 complex interacts with MYC. EP400 interacts with TRRAP, RUVBL1 and RUVBL2. Component of a SWR1-like complex. Interacts with ZNF42. Interacts with PHF5A. Expressed in brain, thymus, lung, liver, spleen, kidney, colon and bone marrow.

It is found in the nucleus. Functionally, component of the NuA4 histone acetyltransferase complex which is involved in transcriptional activation of select genes principally by acetylation of nucleosomal histones H4 and H2A. This modification may both alter nucleosome - DNA interactions and promote interaction of the modified histones with other proteins which positively regulate transcription. May be required for transcriptional activation of E2F1 and MYC target genes during cellular proliferation. The NuA4 complex ATPase and helicase activities seem to be, at least in part, contributed by the association of RUVBL1 and RUVBL2 with EP400. Component of a SWR1-like complex that specifically mediates the removal of histone H2A.Z/H2AZ1 from the nucleosome. Regulates transcriptional activity of ZNF42. This is E1A-binding protein p400 (Ep400) from Mus musculus (Mouse).